Here is a 1187-residue protein sequence, read N- to C-terminus: AT-rich interactive domain-containing protein 5B (1187 aa).

Lys-130 is covalently cross-linked (Glycyl lysine isopeptide (Lys-Gly) (interchain with G-Cter in SUMO2)). The interval 251–279 (RPRKKKPCPQRRDSFSGVKDSNNNSDGKA) is disordered. Ser-264 is subject to Phosphoserine. The ARID domain occupies 319-411 (RADEQAFLVA…LILPYERFIK (93 aa)). Lys-337 is modified (N6,N6-dimethyllysine). Residues 413 to 611 (EEDKPLPPIK…QPPLASQSEL (199 aa)) are disordered. Residue Lys-446 forms a Glycyl lysine isopeptide (Lys-Gly) (interchain with G-Cter in SUMO2) linkage. A compositionally biased stretch (basic and acidic residues) spans 447–459 (HEIPKSKKEKENA). The span at 460 to 469 (PKPQESPEVS) shows a compositional bias: low complexity. Residues Lys-494 and Lys-496 each participate in a glycyl lysine isopeptide (Lys-Gly) (interchain with G-Cter in SUMO2) cross-link. The span at 512–522 (ADPEKDSDADR) shows a compositional bias: basic and acidic residues. Residues 527–537 (ATAAEEAGEQG) are compositionally biased toward low complexity. Glycyl lysine isopeptide (Lys-Gly) (interchain with G-Cter in SUMO2) cross-links involve residues Lys-767, Lys-774, Lys-803, Lys-810, Lys-893, Lys-916, Lys-920, Lys-935, Lys-988, Lys-1000, and Lys-1013. The tract at residues 891–977 (DKKPAPAEAP…YPEPLSRASR (87 aa)) is disordered. At Ser-1032 the chain carries Phosphoserine. The tract at residues 1032 to 1065 (SPLDPPKEACGKDKGAELEGEGGKAAAAHGGPAA) is disordered. The span at 1036-1048 (PPKEACGKDKGAE) shows a compositional bias: basic and acidic residues. Residues Lys-1055 and Lys-1069 each participate in a glycyl lysine isopeptide (Lys-Gly) (interchain with G-Cter in SUMO2) cross-link. The span at 1055–1065 (KAAAAHGGPAA) shows a compositional bias: low complexity. Ser-1132 bears the Phosphoserine mark.

This sequence belongs to the ARID5B family. Methylation at Lys-337 prevents DNA-binding. Demethylation by PHF2 promotes recruitment of the PHF2-ARID5B complex to promoters.

It is found in the nucleus. Functionally, transcription coactivator that binds to the 5'-AATA[CT]-3' core sequence and plays a key role in adipogenesis and liver development. Acts by forming a complex with phosphorylated PHF2, which mediates demethylation at Lys-337, leading to target the PHF2-ARID5B complex to target promoters, where PHF2 mediates demethylation of dimethylated 'Lys-9' of histone H3 (H3K9me2), followed by transcription activation of target genes. The PHF2-ARID5B complex acts as a coactivator of HNF4A in liver. Required for adipogenesis: regulates triglyceride metabolism in adipocytes by regulating expression of adipogenic genes. Overexpression leads to induction of smooth muscle marker genes, suggesting that it may also act as a regulator of smooth muscle cell differentiation and proliferation. The protein is AT-rich interactive domain-containing protein 5B (ARID5B) of Canis lupus familiaris (Dog).